We begin with the raw amino-acid sequence, 370 residues long: Flagellar P-ring protein (370 aa).

An N-terminal signal peptide occupies residues 1–21 (MRLFSVVLAVFTLLLPSQAFA).

The protein belongs to the FlgI family. As to quaternary structure, the basal body constitutes a major portion of the flagellar organelle and consists of four rings (L,P,S, and M) mounted on a central rod.

The protein localises to the periplasm. It localises to the bacterial flagellum basal body. Functionally, assembles around the rod to form the L-ring and probably protects the motor/basal body from shearing forces during rotation. The sequence is that of Flagellar P-ring protein from Alteromonas mediterranea (strain DSM 17117 / CIP 110805 / LMG 28347 / Deep ecotype).